A 105-amino-acid chain; its full sequence is Small ribosomal subunit protein uS10 (105 aa).

Belongs to the universal ribosomal protein uS10 family. In terms of assembly, part of the 30S ribosomal subunit.

Its function is as follows. Involved in the binding of tRNA to the ribosomes. The sequence is that of Small ribosomal subunit protein uS10 from Thermus thermophilus (strain ATCC BAA-163 / DSM 7039 / HB27).